The primary structure comprises 148 residues: Arginine repressor (148 aa).

The protein belongs to the ArgR family.

Its subcellular location is the cytoplasm. It participates in amino-acid biosynthesis; L-arginine biosynthesis [regulation]. Regulates arginine biosynthesis genes. This is Arginine repressor from Chlorobium phaeobacteroides (strain BS1).